Reading from the N-terminus, the 434-residue chain is 4-hydroxy-3-methylbut-2-en-1-yl diphosphate synthase (flavodoxin) (434 aa).

A compositionally biased stretch (polar residues) spans Met-1–Ser-15. The disordered stretch occupies residues Met-1 to Gln-24. Positions 322, 325, 368, and 375 each coordinate [4Fe-4S] cluster.

This sequence belongs to the IspG family. [4Fe-4S] cluster is required as a cofactor.

It catalyses the reaction (2E)-4-hydroxy-3-methylbut-2-enyl diphosphate + oxidized [flavodoxin] + H2O + 2 H(+) = 2-C-methyl-D-erythritol 2,4-cyclic diphosphate + reduced [flavodoxin]. The protein operates within isoprenoid biosynthesis; isopentenyl diphosphate biosynthesis via DXP pathway; isopentenyl diphosphate from 1-deoxy-D-xylulose 5-phosphate: step 5/6. Its function is as follows. Converts 2C-methyl-D-erythritol 2,4-cyclodiphosphate (ME-2,4cPP) into 1-hydroxy-2-methyl-2-(E)-butenyl 4-diphosphate. The sequence is that of 4-hydroxy-3-methylbut-2-en-1-yl diphosphate synthase (flavodoxin) from Burkholderia ambifaria (strain MC40-6).